The primary structure comprises 35 residues: Photosystem II reaction center protein T (35 aa).

Residues 3–23 (ALVYTFLLVGTLGIIFFAIFF) form a helical membrane-spanning segment.

This sequence belongs to the PsbT family. In terms of assembly, PSII is composed of 1 copy each of membrane proteins PsbA, PsbB, PsbC, PsbD, PsbE, PsbF, PsbH, PsbI, PsbJ, PsbK, PsbL, PsbM, PsbT, PsbY, PsbZ, Psb30/Ycf12, at least 3 peripheral proteins of the oxygen-evolving complex and a large number of cofactors. It forms dimeric complexes.

It localises to the plastid. It is found in the chloroplast thylakoid membrane. In terms of biological role, found at the monomer-monomer interface of the photosystem II (PS II) dimer, plays a role in assembly and dimerization of PSII. PSII is a light-driven water plastoquinone oxidoreductase, using light energy to abstract electrons from H(2)O, generating a proton gradient subsequently used for ATP formation. This chain is Photosystem II reaction center protein T, found in Chara vulgaris (Common stonewort).